A 412-amino-acid chain; its full sequence is MKIHSCLSAILLFLFFSASSAKQNVRTERISGSAGDVLEDDPVGKLKVYVYELPSKYNKKLLQKDPRCLTHMFAAEIFMHRFLLSSPVRTRNPDEADWFYTPIYPTCDLTPTGLPLPFKSPRMMRSSIQLISSNWPYWNRTEGADHFFVVPHDFGACFHYQEEKAIERGILPLLQRATLVQTFGQRNHVCLDEGSITIPPFAPPQKMQAHFIPPDIPRSIFVYFRGLFYDVNNDPEGGYYARGARAAVWENFKNNPLFDISTDHPTTYYEDMQRAIFCLCPLGWAPWSPRLVEAVVFGCIPVIIADDIVLPFADAIPWEEIGVFVAEKDVPELDTILTSIPTEVILRKQRLLANPSMKRAMLFPQPAQPGDAFHQILNGLARKLPHDKSIYLKTGEKALNWTAGPVADLKPW.

The helical; Signal-anchor for type II membrane protein transmembrane segment at 1–21 (MKIHSCLSAILLFLFFSASSA) threads the bilayer. Residues 22 to 412 (KQNVRTERIS…AGPVADLKPW (391 aa)) are Lumenal-facing. 2 N-linked (GlcNAc...) asparagine glycosylation sites follow: asparagine 139 and asparagine 400.

The protein belongs to the glycosyltransferase 47 family. As to expression, limited to xylem cells. Expressed in the root tip, xylem cells of roots, and in the vasculature of roots, cotyledons and leaves.

It is found in the golgi apparatus membrane. Functionally, involved in the synthesis of the hemicellulose glucuronoxylan, a major component of secondary cell walls. Probably involved in the elongation of glucuronoxylan xylosyl backbone, especially in the formation of GlcUA side chain of xylans. In Arabidopsis thaliana (Mouse-ear cress), this protein is Probable beta-1,4-xylosyltransferase IRX10 (IRX10).